The primary structure comprises 360 residues: Hyaluronan and proteoglycan link protein 3 (360 aa).

Positions 1 to 17 (MGLLLLVPLLLLPGSYG) are cleaved as a signal peptide. The Ig-like V-type domain maps to 48–164 (KLVVETPEET…ESGLVELELR (117 aa)). Disulfide bonds link C70–C146, C188–C259, C212–C233, C286–C356, and C311–C332. Link domains follow at residues 166–261 (VVFP…FCFA) and 266–358 (GRVY…YCYR).

The protein belongs to the HAPLN family. In terms of tissue distribution, widely expressed with highest levels in spleen and placenta.

Its subcellular location is the secreted. The protein localises to the extracellular space. It localises to the extracellular matrix. May function in hyaluronic acid binding. In Homo sapiens (Human), this protein is Hyaluronan and proteoglycan link protein 3 (HAPLN3).